Reading from the N-terminus, the 338-residue chain is Anthranilate phosphoribosyltransferase (338 aa).

5-phospho-alpha-D-ribose 1-diphosphate is bound by residues Gly81, 84-85, Ser89, 91-94, 109-117, and Ala121; these read GD, NVST, and KHGNRALSS. Residue Gly81 coordinates anthranilate. Residue Ser93 coordinates Mg(2+). Asn112 provides a ligand contact to anthranilate. Arg167 lines the anthranilate pocket. Residues Asp226 and Glu227 each contribute to the Mg(2+) site.

It belongs to the anthranilate phosphoribosyltransferase family. Homodimer. Requires Mg(2+) as cofactor.

It catalyses the reaction N-(5-phospho-beta-D-ribosyl)anthranilate + diphosphate = 5-phospho-alpha-D-ribose 1-diphosphate + anthranilate. It functions in the pathway amino-acid biosynthesis; L-tryptophan biosynthesis; L-tryptophan from chorismate: step 2/5. In terms of biological role, catalyzes the transfer of the phosphoribosyl group of 5-phosphorylribose-1-pyrophosphate (PRPP) to anthranilate to yield N-(5'-phosphoribosyl)-anthranilate (PRA). The sequence is that of Anthranilate phosphoribosyltransferase from Rhodopseudomonas palustris (strain HaA2).